The following is a 346-amino-acid chain: N-acetyl-gamma-glutamyl-phosphate reductase (346 aa).

Cys150 is a catalytic residue.

This sequence belongs to the NAGSA dehydrogenase family. Type 1 subfamily.

Its subcellular location is the cytoplasm. It catalyses the reaction N-acetyl-L-glutamate 5-semialdehyde + phosphate + NADP(+) = N-acetyl-L-glutamyl 5-phosphate + NADPH + H(+). It functions in the pathway amino-acid biosynthesis; L-arginine biosynthesis; N(2)-acetyl-L-ornithine from L-glutamate: step 3/4. Functionally, catalyzes the NADPH-dependent reduction of N-acetyl-5-glutamyl phosphate to yield N-acetyl-L-glutamate 5-semialdehyde. The chain is N-acetyl-gamma-glutamyl-phosphate reductase from Moorella thermoacetica (strain ATCC 39073 / JCM 9320).